The following is a 329-amino-acid chain: Phenylalanine--tRNA ligase alpha subunit (329 aa).

Glutamate 253 contacts Mg(2+).

The protein belongs to the class-II aminoacyl-tRNA synthetase family. Phe-tRNA synthetase alpha subunit type 1 subfamily. In terms of assembly, tetramer of two alpha and two beta subunits. Mg(2+) is required as a cofactor.

The protein localises to the cytoplasm. The enzyme catalyses tRNA(Phe) + L-phenylalanine + ATP = L-phenylalanyl-tRNA(Phe) + AMP + diphosphate + H(+). The polypeptide is Phenylalanine--tRNA ligase alpha subunit (Teredinibacter turnerae (strain ATCC 39867 / T7901)).